The sequence spans 98 residues: Large ribosomal subunit protein uL23 (98 aa).

The protein belongs to the universal ribosomal protein uL23 family. Part of the 50S ribosomal subunit. Contacts protein L29, and trigger factor when it is bound to the ribosome.

Its function is as follows. One of the early assembly proteins it binds 23S rRNA. One of the proteins that surrounds the polypeptide exit tunnel on the outside of the ribosome. Forms the main docking site for trigger factor binding to the ribosome. The chain is Large ribosomal subunit protein uL23 from Saccharophagus degradans (strain 2-40 / ATCC 43961 / DSM 17024).